We begin with the raw amino-acid sequence, 134 residues long: Phosphoribosyl-AMP cyclohydrolase (134 aa).

Mg(2+) is bound at residue Asp90. Cys91 is a Zn(2+) binding site. 2 residues coordinate Mg(2+): Asp92 and Asp94. Residues Cys107 and Cys114 each coordinate Zn(2+).

The protein belongs to the PRA-CH family. As to quaternary structure, homodimer. It depends on Mg(2+) as a cofactor. The cofactor is Zn(2+).

Its subcellular location is the cytoplasm. The enzyme catalyses 1-(5-phospho-beta-D-ribosyl)-5'-AMP + H2O = 1-(5-phospho-beta-D-ribosyl)-5-[(5-phospho-beta-D-ribosylamino)methylideneamino]imidazole-4-carboxamide. It functions in the pathway amino-acid biosynthesis; L-histidine biosynthesis; L-histidine from 5-phospho-alpha-D-ribose 1-diphosphate: step 3/9. Catalyzes the hydrolysis of the adenine ring of phosphoribosyl-AMP. This is Phosphoribosyl-AMP cyclohydrolase from Arthrobacter sp. (strain FB24).